The following is a 58-amino-acid chain: Proteinase inhibitor PSKP-1 (58 aa).

The 58-residue stretch at 1-58 (VIEPKCYKYEGKKCPPDINPVCGTDKRTYYNECALCVFIRQSTKKADKAIKIKKWGKC) folds into the Kazal-like domain. 3 cysteine pairs are disulfide-bonded: C6-C36, C14-C33, and C22-C58.

In terms of assembly, monomer. Skin.

The protein localises to the secreted. Has antibacterial activity against Gram-negative bacterium E.coli ATCC 11229. Shows hemagglutinating activity. Inhibits prolyl endopeptidase, but not trypsin, chymotrypsin, V8 protease and proteinase K. May have a role in mucosal defense against microbes by interacting directly with their membranes. This Phyllomedusa sauvagei (Sauvage's leaf frog) protein is Proteinase inhibitor PSKP-1.